The primary structure comprises 159 residues: NADH-quinone oxidoreductase subunit I (159 aa).

2 consecutive 4Fe-4S ferredoxin-type domains span residues 51–80 (RRYE…IESD) and 90–119 (TRYD…EGPN). Residues C60, C63, C66, C70, C99, C102, C105, and C109 each coordinate [4Fe-4S] cluster.

It belongs to the complex I 23 kDa subunit family. In terms of assembly, NDH-1 is composed of 14 different subunits. Subunits NuoA, H, J, K, L, M, N constitute the membrane sector of the complex. [4Fe-4S] cluster is required as a cofactor.

The protein localises to the cell inner membrane. The enzyme catalyses a quinone + NADH + 5 H(+)(in) = a quinol + NAD(+) + 4 H(+)(out). Functionally, NDH-1 shuttles electrons from NADH, via FMN and iron-sulfur (Fe-S) centers, to quinones in the respiratory chain. The immediate electron acceptor for the enzyme in this species is believed to be ubiquinone. Couples the redox reaction to proton translocation (for every two electrons transferred, four hydrogen ions are translocated across the cytoplasmic membrane), and thus conserves the redox energy in a proton gradient. The chain is NADH-quinone oxidoreductase subunit I from Rickettsia prowazekii (strain Madrid E).